The following is a 250-amino-acid chain: Low affinity immunoglobulin gamma Fc region receptor III-A (250 aa).

An N-terminal signal peptide occupies residues 1 to 20; sequence MWRLLSPTALLLLVSAGTRA. At 21-207 the chain is on the extracellular side; sequence ADLSKAMVVL…TSTFLPHWYQ (187 aa). 2 consecutive Ig-like C2-type domains span residues 32-105 and 120-189; these read PEWN…LEVH and EGDT…VNIT. Cystine bridges form between C47-C89 and C128-C172. N-linked (GlcNAc...) asparagine glycosylation is found at N63, N133, N180, and N187. The helical transmembrane segment at 208 to 228 threads the bilayer; the sequence is IAFFLVTALLFVVDTGLHVAV. Residues 229–250 are Cytoplasmic-facing; sequence QRDLQSSVKEWKDGKVTWSHGP.

In terms of assembly, forms a heterooligomeric complex with ITAM-containing signaling subunits FCER1G. Interacts (via transmembrane domain) with signaling subunits; this interaction is a prerequisite for receptor complex expression on the cell surface and intracellular signal transduction. Binds the Fc region of antigen-complexed IgG.

The protein resides in the cell membrane. In terms of biological role, receptor for the invariable Fc fragment of immunoglobulin gamma (IgG). Optimally activated upon binding of clustered antigen-IgG complexes displayed on cell surfaces, triggers lysis of antibody-coated cells, a process known as antibody-dependent cellular cytotoxicity (ADCC). Does not bind free monomeric IgG, thus avoiding inappropriate effector cell activation in the absence of antigenic trigger. Mediates IgG effector functions on natural killer (NK) cells. Binds antigen-IgG complexes generated upon infection and triggers NK cell-dependent cytokine production and degranulation to limit viral load and propagation. Fc-binding subunit that associates with FCER1G adapter to form functional signaling complexes. Following the engagement of antigen-IgG complexes, triggers phosphorylation of immunoreceptor tyrosine-based activation motif (ITAM)-containing adapter with subsequent activation of phosphatidylinositol 3-kinase signaling and sustained elevation of intracellular calcium that ultimately drive NK cell activation. Mediates enhanced ADCC in response to afucosylated IgGs. The chain is Low affinity immunoglobulin gamma Fc region receptor III-A from Felis catus (Cat).